The sequence spans 545 residues: Chaperonin GroEL (545 aa).

ATP is bound by residues 30-33, lysine 51, 87-91, glycine 415, 479-481, and aspartate 495; these read TLGP, DGTTT, and NAA. Positions 526–545 are disordered; it reads KEDKPDLGGAGGMGGMGGMM. Residues 533–545 show a composition bias toward gly residues; that stretch reads GGAGGMGGMGGMM.

Belongs to the chaperonin (HSP60) family. Forms a cylinder of 14 subunits composed of two heptameric rings stacked back-to-back. Interacts with the co-chaperonin GroES.

It is found in the cytoplasm. It catalyses the reaction ATP + H2O + a folded polypeptide = ADP + phosphate + an unfolded polypeptide.. In terms of biological role, together with its co-chaperonin GroES, plays an essential role in assisting protein folding. The GroEL-GroES system forms a nano-cage that allows encapsulation of the non-native substrate proteins and provides a physical environment optimized to promote and accelerate protein folding. In Sodalis glossinidius, this protein is Chaperonin GroEL.